The chain runs to 198 residues: Putative pseudouridine methyltransferase (198 aa).

Residues M132 and C186 each coordinate S-adenosyl-L-methionine.

This sequence belongs to the methyltransferase superfamily. TrmY family.

The protein resides in the cytoplasm. The chain is Putative pseudouridine methyltransferase from Shewanella baltica (strain OS223).